The sequence spans 496 residues: Nectin 1a (496 aa).

Positions 1-20 (MMFINLLLRLMCVFLIGADG) are cleaved as a signal peptide. Over 21 to 349 (QMVQMESSKA…FQDQQQAGVV (329 aa)) the chain is Extracellular. The 105-residue stretch at 34–138 (GSQVELPCQF…GNRENMVNLT (105 aa)) folds into the Ig-like V-type domain. C41 and C121 are joined by a disulfide. N62 and N136 each carry an N-linked (GlcNAc...) asparagine glycan. Ig-like C2-type domains lie at 143-238 (PMIQ…VTLN) and 243-330 (PEVI…VIVT). Disulfide bonds link C168–C222 and C265–C312. The N-linked (GlcNAc...) asparagine glycan is linked to N282. The chain crosses the membrane as a helical span at residues 350–370 (IGGAVVCGTVLLAAVTLLVVF). The Cytoplasmic segment spans residues 371 to 496 (LYRRRCMFKG…SVISKEEWYV (126 aa)).

The protein belongs to the nectin family. In terms of assembly, cis- and trans-homodimer. Can form trans-heterodimers. Expressed in the developing eye and nervous system.

Its subcellular location is the cell membrane. It localises to the cell junction. The protein localises to the adherens junction. In terms of biological role, cell adhesion molecule that promotes cell-cell contacts and plays important roles in the development of the nervous system. Acts by forming homophilic or heterophilic trans-dimers. The protein is Nectin 1a of Danio rerio (Zebrafish).